We begin with the raw amino-acid sequence, 334 residues long: Ferrochelatase (334 aa).

Fe cation-binding residues include His-207 and Glu-288.

It belongs to the ferrochelatase family.

The protein resides in the cytoplasm. The catalysed reaction is heme b + 2 H(+) = protoporphyrin IX + Fe(2+). Its pathway is porphyrin-containing compound metabolism; protoheme biosynthesis; protoheme from protoporphyrin-IX: step 1/1. Catalyzes the ferrous insertion into protoporphyrin IX. The chain is Ferrochelatase from Helicobacter pylori (strain ATCC 700392 / 26695) (Campylobacter pylori).